The sequence spans 323 residues: Olfactory receptor 1E2 (323 aa).

Residues 1-25 (MMGQNQTSISDFLLLGLPIQPEQQN) lie on the Extracellular side of the membrane. The N-linked (GlcNAc...) asparagine glycan is linked to N5. The chain crosses the membrane as a helical span at residues 26-49 (LCYALFLAMYLTTLLGNLLIIVLI). Over 50-57 (RLDSHLHT) the chain is Cytoplasmic. A helical transmembrane segment spans residues 58 to 79 (PVYLFLSNLSFSDLCFSSVTMP). Over 80–100 (KLLQNMQNQDPSIPYADCLTQ) the chain is Extracellular. C97 and C198 form a disulfide bridge. A helical membrane pass occupies residues 101-120 (MYFFLYFSDLESFLLVAMAY). The Cytoplasmic portion of the chain corresponds to 121–148 (DRYVAICFPMHYTAICFLLHYTAIMSPM). The helical transmembrane segment at 149–167 (LCLSVVALSWVLTTFHAML) threads the bilayer. Residues 168–205 (HTLLMARLCFCADNVIPHFFCDMSALLKLACSDTRVNE) lie on the Extracellular side of the membrane. Residues 206–228 (WVIFIMGGLILVIPFLLILGSYA) form a helical membrane-spanning segment. Residues 229–245 (RIVSSILKVPSSKGICK) are Cytoplasmic-facing. The chain crosses the membrane as a helical span at residues 246–269 (AFSTCGSHLSVVSLFYGTVIGLYL). Residues 270–281 (CPSANSSTLKDT) lie on the Extracellular side of the membrane. N274 carries N-linked (GlcNAc...) asparagine glycosylation. Residues 282–301 (VMAMMYTVVTPMLTPFIYSL) traverse the membrane as a helical segment. At 302–323 (RNRDMKGALERVICKRKNPFLL) the chain is on the cytoplasmic side.

The protein belongs to the G-protein coupled receptor 1 family.

The protein resides in the cell membrane. Odorant receptor. This chain is Olfactory receptor 1E2 (OR1E2), found in Homo sapiens (Human).